We begin with the raw amino-acid sequence, 424 residues long: Serine hydroxymethyltransferase (424 aa).

(6S)-5,6,7,8-tetrahydrofolate contacts are provided by residues Leu113 and 117–119; that span reads GHL. Lys222 carries the N6-(pyridoxal phosphate)lysine modification. 361-363 serves as a coordination point for (6S)-5,6,7,8-tetrahydrofolate; the sequence is SPF.

It belongs to the SHMT family. In terms of assembly, homodimer. It depends on pyridoxal 5'-phosphate as a cofactor.

Its subcellular location is the cytoplasm. The catalysed reaction is (6R)-5,10-methylene-5,6,7,8-tetrahydrofolate + glycine + H2O = (6S)-5,6,7,8-tetrahydrofolate + L-serine. Its pathway is one-carbon metabolism; tetrahydrofolate interconversion. It functions in the pathway amino-acid biosynthesis; glycine biosynthesis; glycine from L-serine: step 1/1. Its function is as follows. Catalyzes the reversible interconversion of serine and glycine with tetrahydrofolate (THF) serving as the one-carbon carrier. This reaction serves as the major source of one-carbon groups required for the biosynthesis of purines, thymidylate, methionine, and other important biomolecules. Also exhibits THF-independent aldolase activity toward beta-hydroxyamino acids, producing glycine and aldehydes, via a retro-aldol mechanism. This chain is Serine hydroxymethyltransferase, found in Flavobacterium psychrophilum (strain ATCC 49511 / DSM 21280 / CIP 103535 / JIP02/86).